The chain runs to 143 residues: Endoribonuclease YbeY (143 aa).

H111, H115, and D121 together coordinate Zn(2+).

It belongs to the endoribonuclease YbeY family. The cofactor is Zn(2+).

It is found in the cytoplasm. Single strand-specific metallo-endoribonuclease involved in late-stage 70S ribosome quality control and in maturation of the 3' terminus of the 16S rRNA. This chain is Endoribonuclease YbeY, found in Cytophaga hutchinsonii (strain ATCC 33406 / DSM 1761 / CIP 103989 / NBRC 15051 / NCIMB 9469 / D465).